The sequence spans 288 residues: Type II restriction enzyme DpnII (288 aa).

It belongs to the DpnII type II restriction endonuclease family. Homodimer.

The enzyme catalyses Endonucleolytic cleavage of DNA to give specific double-stranded fragments with terminal 5'-phosphates.. In terms of biological role, a P subtype restriction enzyme that recognizes the double-stranded unmethylated sequence 5'-GATC-3' and cleaves before G-1. This is Type II restriction enzyme DpnII from Streptococcus pneumoniae.